The following is a 172-amino-acid chain: AIG2-like protein C (172 aa).

Substrate is bound at residue 13–18 (YGSLQE). Residue Glu-81 is the Proton acceptor of the active site.

Belongs to the gamma-glutamylcyclotransferase family. As to expression, expressed in flowers, leaves, stems and roots.

In terms of biological role, putative gamma-glutamylcyclotransferase. This chain is AIG2-like protein C, found in Arabidopsis thaliana (Mouse-ear cress).